The following is a 289-amino-acid chain: MSNISAKLVKELRERTGAGMMECKKALVAAAGDIEKAAEEMRISGQAKADKKASRVAAEGVIEVYAADGRAILLEINSETDFVARDETFKKFAQEAVKAAHAANAKTIEEVLAAKTSNGETVEEVRKSLIAKIGENIQVRRVKTVEAETLGAYIHGSKIGVVAALEGGDEDLAKDVAMHVAAANPMVVSGDQVPADVVAKEKEIFTAQAKESGKPAEIIEKMIVGRIRKFLDEVALLGQDFVKDPAIKVEKLVKDKGAKVVNFIRLDVGEGIEKKEEDFAAEVMSQIKG.

The segment at 80–83 (TDFV) is involved in Mg(2+) ion dislocation from EF-Tu.

The protein belongs to the EF-Ts family.

Its subcellular location is the cytoplasm. Its function is as follows. Associates with the EF-Tu.GDP complex and induces the exchange of GDP to GTP. It remains bound to the aminoacyl-tRNA.EF-Tu.GTP complex up to the GTP hydrolysis stage on the ribosome. This chain is Elongation factor Ts, found in Francisella tularensis subsp. tularensis (strain FSC 198).